The chain runs to 286 residues: UDP-3-O-acyl-N-acetylglucosamine deacetylase (286 aa).

Zn(2+) is bound by residues His79, His237, and Asp241. His264 acts as the Proton donor in catalysis.

The protein belongs to the LpxC family. The cofactor is Zn(2+).

The enzyme catalyses a UDP-3-O-[(3R)-3-hydroxyacyl]-N-acetyl-alpha-D-glucosamine + H2O = a UDP-3-O-[(3R)-3-hydroxyacyl]-alpha-D-glucosamine + acetate. It participates in glycolipid biosynthesis; lipid IV(A) biosynthesis; lipid IV(A) from (3R)-3-hydroxytetradecanoyl-[acyl-carrier-protein] and UDP-N-acetyl-alpha-D-glucosamine: step 2/6. Functionally, catalyzes the hydrolysis of UDP-3-O-myristoyl-N-acetylglucosamine to form UDP-3-O-myristoylglucosamine and acetate, the committed step in lipid A biosynthesis. The chain is UDP-3-O-acyl-N-acetylglucosamine deacetylase from Brucella abortus (strain 2308).